Consider the following 203-residue polypeptide: MSLTLLTLAMILTAYLAGSISSAVLVCRLRGLPDPRSQGSGNPGATNVLRIGGASAAAMVLLFDMLKGAVPAYVAFRLGVDAVSLGVIAIAACLGHIFPIFFKFKGGKGVATAFGAMAPIGADLSLALIATWVIVVLICRYSSLAAIVTALLAPAYTWYFDERFTVPVAMLSLLIIIRHKENIHRLLKGEESKVSRKKRTDGN.

The next 5 helical transmembrane spans lie at 6–26 (LTLA…AVLV), 56–76 (AAAM…YVAF), 82–102 (AVSL…PIFF), 118–138 (APIG…VVLI), and 141–161 (YSSL…WYFD).

It belongs to the PlsY family. In terms of assembly, probably interacts with PlsX.

It localises to the cell inner membrane. It catalyses the reaction an acyl phosphate + sn-glycerol 3-phosphate = a 1-acyl-sn-glycero-3-phosphate + phosphate. It functions in the pathway lipid metabolism; phospholipid metabolism. Catalyzes the transfer of an acyl group from acyl-phosphate (acyl-PO(4)) to glycerol-3-phosphate (G3P) to form lysophosphatidic acid (LPA). This enzyme utilizes acyl-phosphate as fatty acyl donor, but not acyl-CoA or acyl-ACP. This is Glycerol-3-phosphate acyltransferase from Shewanella loihica (strain ATCC BAA-1088 / PV-4).